A 163-amino-acid chain; its full sequence is Staphylokinase (163 aa).

An N-terminal signal peptide occupies residues Met-1–Ala-27.

This sequence belongs to the staphylokinase family.

The protein localises to the secreted. Functionally, potent plasminogen activator that converts plasminogen into plasmin. It forms a 1:1 complex with plasmin, which in turn activates other plasminogen molecules. This is Staphylokinase (sak) from Staphylococcus aureus (strain MRSA252).